The sequence spans 1849 residues: MDLSADHVEEVQNVLNAMQKILECPICLELIKEPVSTKCDHIFCKFCMLKLLNQKKGPSQCPLCKNDITKRSLQESTRFSQLVEELLKIIHAFELDTGLQFANSYNFSRKEDNSPEHLKEEVSIIQSMGYRNRAKRLWQSEPENPTLQETSLTVELSNLGIVRSLRTKQQTQSQNKSVYIELGSDSSEDTVNKASYFSVGDHELLEITPQGAKAKTNLNPAEKAACEFSEKDITNTEHHQLSIKDLITTQKHATETHPEKYQGISVSDFHVEPCGTDTHASSLQHENSSLLLTENRLNVEKAEFCNKSKQPVLVKSQQSRWAESKGTCKDRQIPSTEKKIVLNTDPLYRRKELRKQKPACPDSPGDSQDVPWVTLNNSIQKVNDWFSRSDEILTSDDSCDGGSESNNEVAGAVEIPNKVDGYSGSSEKINLMASDPHGTLIHERVHSKPVESNIEDKIFGKTYRRKSSLPNFSHIAEDLILGAFTVEPQITQEQPLTNKLKCKRRGTSGLQPEDFIKKVDLTIVPKTPEKMTEGTDQTEQKCHGMNITSDGHENKTKRDYVQKEQNANPAESLEKESVFRTEAEPISISISNMELELNIHRSKAPKNRLKRKSSTRKIPELELVVSRNPSLPNHTELPIDSSSSNEEMKKKHSSQMPVRQSQKLQLIGDKELTAGAKNNKTYEQINKRLASDAFPELKLTNTPGYFTNCSSKPEEFVHPSLQREENLGTIQVSNSTKDPKDLILREGKALQIERSVESTNISLVPDTDYSTQDSISLLEAKTPEKAKTAPNPCVSLCTATKNLKELIHRDFKDTKNNTEGFQDLLGHDINYVIQETSREMEDSELDTQYLQNTFKASKRQTFALFSNPGNPQKECATVFAHSGSLRDQSPRDPLKCRQKEDSQGKSESKSQHVQAICTTVHFPVADQQDRTPGDDAKCSAKEVTRVCQSSQLRGHKTELVFANKQGVSEKPNLIPSLSPIKSSVKTICKKSPSEKFEEPVTSPEKTLGSESIIQSAVSTISQNNIQESTFKEVSSNSVNEVGSSTNEVGSSVNEVGSSGENIQAEPGRNREPKLRALLGLGLTQPEVYKQSLPVSNCHHPEIKRQGENEDMPQAVKADFSPCLISDNLEQPTGSRHASQVCSETPDNLLNDDEIKENSHFAESDIKERSAVFSESVQKGEFRGSPGPFTHTHLAQGHQRGAGKLESEETVSSEDEELPCFQQLLFGKVTSTLSPSTGCNTVATEGLSKETEGNLESLKSGLNDCSGQVTSAKVSQEHHLNEEARCSGSLFSSQCSAMEDLTTNTNTQDPFLMFERPSKQVYQSESEEVLSDKELVSDDEERETGLEEDSCQEEQSVDSDLGEAVSDHVSETSLSEDGVGLSSQSDILTTQQRDTMQDNLLKLQQEMAELEAVLERHGSQPSHSSASLTADSRGPEHLLNLEQDTSERAILTSEKSRDYSRSQNPESLSADKFPVSLDSSTNKNKEPGMERSSASKFQLSYNRWYMHSSRSLQDRNCPSQKEPINVADMEEQQLAKREAQDLMGSFLPRQDQEGTPYLKSGISLFSHEPESDPSEDRAAEPAHVHSMPPSASALKLSQFRVEESTKNPAAAHIANTTRCNLREESMSKEKPEVISSTERSKKRLSMVASGLTPKELMLVQKFARKHHVTLTNLITEETTHVIMKTDPEFVCERTLKYFLGIAGGKWVVSYFWVTQSIKEGKMLDEHDFEVRGDVVNGRNHQGPKRARESRDKKIFKGLEICCYGPFTNMPTDQLEWMVQLCGASVVKEPSSFTPDQGTHPVVVVQPDAWTEDAGFHVIGQMCEAPVVTREWVLDSVALYQCQELDTYLVP.

Position 1 is an N-acetylmethionine (methionine 1). The RING-type zinc-finger motif lies at 24–65 (CPICLELIKEPVSTKCDHIFCKFCMLKLLNQKKGPSQCPLCK). A Phosphoserine modification is found at serine 114. Glycyl lysine isopeptide (Lys-Gly) (interchain with G-Cter in SUMO2) cross-links involve residues lysine 301 and lysine 339. Phosphoserine is present on residues serine 395, serine 398, serine 423, and serine 434. Residues lysine 457 and lysine 517 each participate in a glycyl lysine isopeptide (Lys-Gly) (interchain with G-Cter in SUMO2) cross-link. Basic and acidic residues predominate over residues 530–542 (KMTEGTDQTEQKC). 2 disordered regions span residues 530 to 558 (KMTE…KTKR) and 620 to 662 (ELEL…RQSQ). Serine 691, serine 711, and serine 720 each carry phosphoserine. Positions 882-912 (SGSLRDQSPRDPLKCRQKEDSQGKSESKSQH) are disordered. The span at 888–910 (QSPRDPLKCRQKEDSQGKSESKS) shows a compositional bias: basic and acidic residues. Residue lysine 981 forms a Glycyl lysine isopeptide (Lys-Gly) (interchain with G-Cter in SUMO2) linkage. Serine 982 carries the phosphoserine; by CHEK2 modification. The residue at position 1002 (serine 1002) is a Phosphoserine. The span at 1036–1061 (NSVNEVGSSTNEVGSSVNEVGSSGEN) shows a compositional bias: low complexity. The interval 1036 to 1070 (NSVNEVGSSTNEVGSSVNEVGSSGENIQAEPGRNR) is disordered. A Glycyl lysine isopeptide (Lys-Gly) (interchain with G-Cter in SUMO2) cross-link involves residue lysine 1073. Phosphoserine occurs at positions 1138, 1184, 1211, 1212, 1274, 1323, 1330, 1336, and 1382. A disordered region spans residues 1172-1211 (FSESVQKGEFRGSPGPFTHTHLAQGHQRGAGKLESEETVS). Disordered regions lie at residues 1321 to 1389 (YQSE…ILTT), 1412 to 1433 (VLER…DSRG), and 1452 to 1493 (SEKS…RSSA). Residues 1336–1360 (SDDEERETGLEEDSCQEEQSVDSDL) are compositionally biased toward acidic residues. 2 stretches are compositionally biased toward polar residues: residues 1370–1389 (ETSL…ILTT) and 1418–1429 (SQPSHSSASLTA). Threonine 1389 is modified (phosphothreonine). The interval 1392 to 1419 (RDTMQDNLLKLQQEMAELEAVLERHGSQ) is interaction with PALB2. Residues serine 1418, serine 1452, and serine 1518 each carry the phosphoserine modification. Disordered regions lie at residues 1562 to 1590 (SLFS…PPSA) and 1621 to 1640 (REES…ERSK). Composition is skewed to basic and acidic residues over residues 1566-1582 (HEPE…EPAH) and 1621-1631 (REESMSKEKPE). 2 consecutive BRCT domains span residues 1642-1729 (RLSM…DFEV) and 1749-1848 (RDKK…TYLV).

In terms of assembly, heterodimer with BARD1. Part of the BRCA1-associated genome surveillance complex (BASC), which contains BRCA1, MSH2, MSH6, MLH1, ATM, BLM, PMS2 and the MRE11-RAD50-NBN protein (MRN) complex. This association could be a dynamic process changing throughout the cell cycle and within subnuclear domains. Component of the BRCA1-A complex, at least composed of BRCA1, BARD1, UIMC1/RAP80, ABRAXAS1, BRCC3/BRCC36, BABAM2 and BABAM1/NBA1. Interacts (via the BRCT domains) with ABRAXAS1 (phosphorylated form); this is important for recruitment to sites of DNA damage. Can form a heterotetramer with two molecules of ABRAXAS1 (phosphorylated form). Component of the BRCA1-RBBP8 complex. Interacts (via the BRCT domains) with RBBP8 ('Ser-327' phosphorylated form); the interaction ubiquitinates RBBP8, regulates CHEK1 activation, and involves RBBP8 in BRCA1-dependent G2/M checkpoint control on DNA damage. Associates with RNA polymerase II holoenzyme. Interacts with SMC1A, NELFB, DCLRE1C, CLSPN. CHEK1, CHEK2, BAP1, BRCC3, UBXN1 and PCLAF. Interacts (via BRCT domains) with BRIP1 (phosphorylated form). Interacts with FANCD2 (ubiquitinated form). Interacts with H2AX (phosphorylated on 'Ser-140'). Interacts (via the BRCT domains) with ACACA (phosphorylated form); the interaction prevents dephosphorylation of ACACA. Part of a BRCA complex containing BRCA1, BRCA2 and PALB2. Interacts directly with PALB2; the interaction is essential for its function in HRR. Interacts directly with BRCA2; the interaction occurs only in the presence of PALB2 which serves as the bridging protein. Interacts (via the BRCT domains) with LMO4; the interaction represses the transcriptional activity of BRCA1. Interacts (via the BRCT domains) with CCAR2 (via N-terminus); the interaction represses the transcriptional activator activity of BRCA1. Interacts with EXD2. Interacts (via C-terminus) with DHX9; this interaction is direct and links BRCA1 to the RNA polymerase II holoenzyme. Interacts with DNA helicase ZGRF1; the interaction is increased following DNA damage induction. Post-translationally, phosphorylated in response to IR, UV, and various stimuli that cause checkpoint activation, probably by ATM or ATR. Phosphorylation at Ser-982 by CHEK2 regulates mitotic spindle assembly. Phosphorylation by AURKA regulates centrosomal microtubule nucleation. In terms of processing, autoubiquitinated, undergoes 'Lys-6'-linked polyubiquitination. 'Lys-6'-linked polyubiquitination does not promote degradation.

The protein resides in the nucleus. It localises to the chromosome. Its subcellular location is the cytoplasm. It carries out the reaction S-ubiquitinyl-[E2 ubiquitin-conjugating enzyme]-L-cysteine + [acceptor protein]-L-lysine = [E2 ubiquitin-conjugating enzyme]-L-cysteine + N(6)-ubiquitinyl-[acceptor protein]-L-lysine.. Its pathway is protein modification; protein ubiquitination. E3 ubiquitin-protein ligase that specifically mediates the formation of 'Lys-6'-linked polyubiquitin chains and plays a central role in DNA repair by facilitating cellular responses to DNA damage. It is unclear whether it also mediates the formation of other types of polyubiquitin chains. The BRCA1-BARD1 heterodimer coordinates a diverse range of cellular pathways such as DNA damage repair, ubiquitination and transcriptional regulation to maintain genomic stability. Regulates centrosomal microtubule nucleation. Required for appropriate cell cycle arrests after ionizing irradiation in both the S-phase and the G2 phase of the cell cycle. Required for FANCD2 targeting to sites of DNA damage. Inhibits lipid synthesis by binding to inactive phosphorylated ACACA and preventing its dephosphorylation. Contributes to homologous recombination repair (HRR) via its direct interaction with PALB2, fine-tunes recombinational repair partly through its modulatory role in the PALB2-dependent loading of BRCA2-RAD51 repair machinery at DNA breaks. Component of the BRCA1-RBBP8 complex which regulates CHEK1 activation and controls cell cycle G2/M checkpoints on DNA damage via BRCA1-mediated ubiquitination of RBBP8. Acts as a transcriptional activator. The protein is Breast cancer type 1 susceptibility protein homolog (BRCA1) of Bos taurus (Bovine).